The following is a 597-amino-acid chain: Elongation factor 4 (597 aa).

The tr-type G domain occupies 2–184 (QNIRNFSIIA…DIVKKIPAPE (183 aa)). Residues 14 to 19 (DHGKST) and 131 to 134 (NKID) contribute to the GTP site.

This sequence belongs to the TRAFAC class translation factor GTPase superfamily. Classic translation factor GTPase family. LepA subfamily.

The protein resides in the cell inner membrane. It catalyses the reaction GTP + H2O = GDP + phosphate + H(+). In terms of biological role, required for accurate and efficient protein synthesis under certain stress conditions. May act as a fidelity factor of the translation reaction, by catalyzing a one-codon backward translocation of tRNAs on improperly translocated ribosomes. Back-translocation proceeds from a post-translocation (POST) complex to a pre-translocation (PRE) complex, thus giving elongation factor G a second chance to translocate the tRNAs correctly. Binds to ribosomes in a GTP-dependent manner. The polypeptide is Elongation factor 4 (Haemophilus ducreyi (strain 35000HP / ATCC 700724)).